Consider the following 265-residue polypeptide: Thiazole synthase (265 aa).

The Schiff-base intermediate with DXP role is filled by lysine 103. 1-deoxy-D-xylulose 5-phosphate contacts are provided by residues glycine 164, 190-191 (AG), and 212-213 (NT).

This sequence belongs to the ThiG family. Homotetramer. Forms heterodimers with either ThiH or ThiS.

It is found in the cytoplasm. It catalyses the reaction [ThiS sulfur-carrier protein]-C-terminal-Gly-aminoethanethioate + 2-iminoacetate + 1-deoxy-D-xylulose 5-phosphate = [ThiS sulfur-carrier protein]-C-terminal Gly-Gly + 2-[(2R,5Z)-2-carboxy-4-methylthiazol-5(2H)-ylidene]ethyl phosphate + 2 H2O + H(+). The protein operates within cofactor biosynthesis; thiamine diphosphate biosynthesis. Catalyzes the rearrangement of 1-deoxy-D-xylulose 5-phosphate (DXP) to produce the thiazole phosphate moiety of thiamine. Sulfur is provided by the thiocarboxylate moiety of the carrier protein ThiS. In vitro, sulfur can be provided by H(2)S. This chain is Thiazole synthase, found in Bordetella avium (strain 197N).